The sequence spans 299 residues: Ophiobolin family sesterterpenoid biosynthesis cluster acetyltransferase (299 aa).

Residues 1-20 form the signal peptide; the sequence is MYFFRALLSPVVLWPALVSG. N-linked (GlcNAc...) asparagine glycosylation is found at Asn-28, Asn-58, Asn-77, Asn-126, Asn-177, Asn-212, and Asn-282.

Belongs to the bfoA family.

Its pathway is secondary metabolite biosynthesis; terpenoid biosynthesis. Functionally, acetyltransferase; part of the gene cluster that mediates the biosynthesis of an ophiobolin family sesterterpenoid. In terms of biological role, sesterterpenoid synthase; part of the gene cluster that mediates the biosynthesis of an ophiobolin family sesterterpenoid. The chain is Ophiobolin family sesterterpenoid biosynthesis cluster acetyltransferase from Aspergillus terreus.